The following is a 294-amino-acid chain: Beta-lactamase SME-1 (294 aa).

A signal peptide spans 1–27; sequence MSNKVNFKTASFLFSVCLALSAFNAHA. Cysteine 72 and cysteine 242 are joined by a disulfide. Serine 73 acts as the Nucleophile; acyl-ester intermediate in catalysis. Positions 73, 76, 133, and 135 each coordinate a beta-lactam. Glutamate 172 acts as the Proton acceptor in catalysis. Position 239 (threonine 239) interacts with a beta-lactam.

The protein belongs to the class-A beta-lactamase family.

The catalysed reaction is a beta-lactam + H2O = a substituted beta-amino acid. Its activity is regulated as follows. Partially inhibited by the beta-lactamase-blocking agents, clavulanic acid and tazobactam. Not inhibited by EDTA. Class A beta-lactamase which confers resistance to the beta-lactam antibiotics, including penicillins, some cephalosporins and carbapenems, to JM109 strain E.coli. Acts via hydrolysis of the beta-lactam ring. Has penicillin-, cephalosporin- and carbapenem-hydrolyzing activities. The sequence is that of Beta-lactamase SME-1 from Serratia marcescens.